The primary structure comprises 555 residues: MARKGNPISVRLGKNRSSDSSRFSEYYYGKFVYQDVNLRSYFGSIRPPTRLTFGFRLGRCILLHFPKRTFIHFFLPRRPRRLKRREKTRPGKEKGRWWTTPGKAGPIGCLRDDTEEERNEVRGRGARKRVESIRLDDRKKQNEIRGWPKKKQRYGYHDRTPSIKKNLSKSLRISGAFKHPKYGGVVNDIAFLIENDDSFRKTKLFKFFFPKKSRSDGPTSYLRTLPAVGPSLNFLVMQYFFNTKNQMNFDPVVVLNHFVAPGAAEPSTMGRANGTGDRSLQKRIRSRIAFFVESSTSEKKCLAEAKNRLTHLIRLANDLGFAGTTKTTISLFPFFGATFFFLRDGVGVTNNLDAREQLLNQLRVKCWNLLGKDKVMELIEKFKDLGGIEELIKVIDMMIEIILRKRGIPYGYNSYFNEVQKMRSFLSNRTNTKTLIESVKIKSVYQSASLIAQDISFQLKNKRRSTHSIFAKIVKEIPKRVEGIRICFSGRLKDAAEKAQTKCYKHRKTSRNVFNQKIDYAPAEVSTRYGISGVKVWISYSQKKGGRAISETYEI.

The disordered stretch occupies residues 1-20 (MARKGNPISVRLGKNRSSDS).

The protein belongs to the universal ribosomal protein uS3 family.

It is found in the mitochondrion. This chain is Small ribosomal subunit protein uS3m (RPS3), found in Brassica napus (Rape).